Here is a 695-residue protein sequence, read N- to C-terminus: GATA zinc finger domain-containing protein 16 (695 aa).

Disordered regions lie at residues 82-111, 134-304, and 422-472; these read SPILASQQQQQHMQSSPILASSNLTNSNNA, VVNS…QQDK, and NNQF…KMRY. Composition is skewed to low complexity over residues 87–111 and 140–149; these read SQQQQQHMQSSPILASSNLTNSNNA and KTTTTNNKPP. Residues 150-174 are a coiled coil; sequence KQSKRKEKERLEEEKQTVAQQQQYQ. Basic and acidic residues predominate over residues 155–165; that stretch reads KEKERLEEEKQ. Positions 199–209 are enriched in polar residues; the sequence is VSTTPYGNSQF. Positions 210–298 are enriched in low complexity; the sequence is NNNNNNNNNN…NSNSNNNNNN (89 aa). Residues 422 to 433 are compositionally biased toward polar residues; that stretch reads NNQFSGDKQSAL. Over residues 434–446 the composition is skewed to low complexity; sequence NNVKNSKGGNTNN. The GATA-type zinc finger occupies 479–504; sequence CHTCGVTNTPEWRRGPNGAKTLCNAC. The interval 523 to 646 is disordered; that stretch reads NSTGVNITEP…TTNSITTPTT (124 aa). Composition is skewed to low complexity over residues 544–556 and 564–646; these read DNNNNNNNSSDSN and GSNN…TPTT.

The polypeptide is GATA zinc finger domain-containing protein 16 (gtaP) (Dictyostelium discoideum (Social amoeba)).